We begin with the raw amino-acid sequence, 342 residues long: 3-isopropylmalate dehydrogenase (342 aa).

4 residues coordinate substrate: Arg92, Arg102, Arg126, and Asp216. The Mg(2+) site is built by Asp216, Asp240, and Asp244. 276-288 (GSAPDIAGKGIAD) is an NAD(+) binding site.

This sequence belongs to the isocitrate and isopropylmalate dehydrogenases family. LeuB type 2 subfamily. As to quaternary structure, homodimer. The cofactor is Mg(2+). It depends on Mn(2+) as a cofactor.

It is found in the cytoplasm. It carries out the reaction (2R,3S)-3-isopropylmalate + NAD(+) = 4-methyl-2-oxopentanoate + CO2 + NADH. The protein operates within amino-acid biosynthesis; L-leucine biosynthesis; L-leucine from 3-methyl-2-oxobutanoate: step 3/4. Its function is as follows. Catalyzes the oxidation of 3-carboxy-2-hydroxy-4-methylpentanoate (3-isopropylmalate) to 3-carboxy-4-methyl-2-oxopentanoate. The product decarboxylates to 4-methyl-2 oxopentanoate. This chain is 3-isopropylmalate dehydrogenase, found in Corynebacterium kroppenstedtii (strain DSM 44385 / JCM 11950 / CIP 105744 / CCUG 35717).